The sequence spans 686 residues: Forkhead box protein P1 (686 aa).

2 stretches are compositionally biased toward polar residues: residues 1–19 (MMQE…IQNG) and 279–292 (IINP…QLSV). Disordered stretches follow at residues 1–23 (MMQE…ASGG) and 279–306 (IINP…EEHS). Positions 295–306 (PKRESLSHEEHS) are enriched in basic and acidic residues. The C2H2-type zinc-finger motif lies at 315–340 (GVCKWPGCEAVCEDFQSFLKHLNSEH). The leucine-zipper stretch occupies residues 357-378 (VQQLELQLAKDKERLQAMMTHL). Residues 391–395 (PLNLV) are CTBP1-binding. The segment covering 403-412 (TASEASPQSL) has biased composition (polar residues). The interval 403–440 (TASEASPQSLPHTPTTPTAPITPVTQGPSVITTTSMHN) is disordered. A compositionally biased stretch (low complexity) spans 413-427 (PHTPTTPTAPITPVT). The span at 428 to 439 (QGPSVITTTSMH) shows a compositional bias: polar residues. The fork-head DNA-binding region spans 474–564 (RPPFTYASLI…PQKISGNPSL (91 aa)). The disordered stretch occupies residues 619–686 (MEHTNSNGSD…EDEPVNEDIE (68 aa)). The span at 621–632 (HTNSNGSDSSPG) shows a compositional bias: polar residues. Acidic residues predominate over residues 676–686 (YEDEPVNEDIE).

It is found in the nucleus. Functionally, transcriptional repressor. This Gallus gallus (Chicken) protein is Forkhead box protein P1 (FOXP1).